The sequence spans 185 residues: Peptidoglycan-recognition protein SC1a/b (185 aa).

The signal sequence occupies residues 1–21 (MVSKVALLLAVLVCSQYMAQG). The N-acetylmuramoyl-L-alanine amidase domain maps to 46–170 (SYAIIHHTAG…RQVSATECPG (125 aa)). A Zn(2+)-binding site is contributed by His51. A disulfide bridge connects residues Cys58 and Cys64. Positions 160 and 168 each coordinate Zn(2+).

Belongs to the N-acetylmuramoyl-L-alanine amidase 2 family. The cofactor is Zn(2+).

The protein resides in the secreted. It carries out the reaction Hydrolyzes the link between N-acetylmuramoyl residues and L-amino acid residues in certain cell-wall glycopeptides.. Its function is as follows. N-acetylmuramyl-L-alanine amidase involved in innate immunity by degrading bacterial peptidoglycans (PGN). Plays a scavenger role by digesting biologically active PGN into biologically inactive fragments. Has no direct bacteriolytic activity. This is Peptidoglycan-recognition protein SC1a/b (PGRP-SC1a) from Drosophila simulans (Fruit fly).